Consider the following 504-residue polypeptide: MSKQDGKLTGLFGAPVSDRENSMTAGRRGPLLMQDVYYLEQISHFDREVIPERRMHAKGSGAFGTFTVTNDITQYTNAKIFSEVGKQTEMFARFSTVSGERGAADLERDIRGFALKFYTEDGNWDLVGNNTPVFFFRDPKLFISLNRAVKRDPRTNMRSAQNNWDFWTGLPEALHQVTILMSDRGMPKGFRNMHGFGSHTYSMYNDKGERVWVKYHFRTQQGIENYTDEEAAKIVGMDRDSSQRDLYNAIENGDYPKWKMYIQVMTEEQAKNHPDNPFDLTKVWYKKDYPLIEVGEFELNRNPENYFLDVEQAAFAPTNIVPGLDYSPDKMLQGRLFSYGDAQRYRLGVNHWQIPVNQPKGVGVENLCPFSRDGQMRFLDNNQGGGPHYYPNNQGIYESQPEHKKPPFPTDGDGYEYNYRQDDDNYFEQPGKLFRLQSEDAKERIFTNTANAMDGVSKDVKVRHIRHCYKADPEYGKGVAKALDIDINQIDLETNQDETYENFK.

Active-site residues include His-56 and Asn-129. Heme is bound at residue Tyr-339.

Belongs to the catalase family. In terms of assembly, homodimer. It depends on heme as a cofactor.

It catalyses the reaction 2 H2O2 = O2 + 2 H2O. Its function is as follows. Decomposes hydrogen peroxide into water and oxygen; serves to protect cells from the toxic effects of hydrogen peroxide. The sequence is that of Catalase (katA) from Staphylococcus epidermidis.